Here is a 157-residue protein sequence, read N- to C-terminus: Protein Smg homolog (157 aa).

Belongs to the Smg family.

This chain is Protein Smg homolog, found in Xylella fastidiosa (strain M23).